A 126-amino-acid chain; its full sequence is Fumarate reductase subunit C (126 aa).

3 helical membrane passes run 30–50 (IFVA…GAGG), 64–84 (VVVV…VTWF), and 105–125 (VLAG…WMVL).

The protein belongs to the FrdC family. In terms of assembly, part of an enzyme complex containing four subunits: a flavoprotein (FrdA), an iron-sulfur protein (FrdB), and two hydrophobic anchor proteins (FrdC and FrdD).

The protein localises to the cell membrane. Its function is as follows. Anchors the catalytic components of the fumarate reductase complex to the cell membrane, binds quinones. In Mycobacterium tuberculosis (strain CDC 1551 / Oshkosh), this protein is Fumarate reductase subunit C.